Consider the following 156-residue polypeptide: Endoribonuclease YbeY (156 aa).

3 residues coordinate Zn(2+): histidine 117, histidine 121, and histidine 127.

Belongs to the endoribonuclease YbeY family. It depends on Zn(2+) as a cofactor.

The protein localises to the cytoplasm. Its function is as follows. Single strand-specific metallo-endoribonuclease involved in late-stage 70S ribosome quality control and in maturation of the 3' terminus of the 16S rRNA. In Shewanella halifaxensis (strain HAW-EB4), this protein is Endoribonuclease YbeY.